The following is a 501-amino-acid chain: Dipeptide and tripeptide permease A (501 aa).

Residues 1–21 (MSTANNKPAESVSLNAFKQPR) lie on the Cytoplasmic side of the membrane. A helical transmembrane segment spans residues 22-44 (AFYLIFSIELWERFGYYGLQGIM). Residues 45–59 (AVYLVKQLGMSEADS) lie on the Periplasmic side of the membrane. The chain crosses the membrane as a helical span at residues 60-80 (ITLFSSFSALVYGLVAIGGWL). Residues 81–89 (GDKVLGTKR) lie on the Cytoplasmic side of the membrane. A helical membrane pass occupies residues 90–110 (VIMLGAIVLAIGYALVAWSGH). A topological domain (periplasmic) is located at residue Asp111. A helical membrane pass occupies residues 112 to 132 (AAIVYMGMATIAVGNGLFKAN). Residues 133-153 (PSSLLSTCYDKNDPRLDGAFT) lie on the Cytoplasmic side of the membrane. Residues 154–174 (MYYMSINIGSFFSMLATPWLA) form a helical membrane-spanning segment. At 175–178 (ARFG) the chain is on the periplasmic side. Residues 179–199 (WSVAFALSVVGMVITIINFAF) traverse the membrane as a helical segment. Topologically, residues 200–218 (CQKWVKQYGSKPDFAPVHM) are cytoplasmic. Residues 219 to 239 (GKLLATIAGVVVLVAIATWLL) form a helical membrane-spanning segment. The Periplasmic segment spans residues 240–246 (HNQGIAR). Residues 247–267 (MVLGVVALGIVVIFAKETIGL) form a helical membrane-spanning segment. Residues 268 to 274 (KGAARRK) are Cytoplasmic-facing. Residues 275-295 (MIVAFLLMVEAIVFFVLYSQM) traverse the membrane as a helical segment. At 296–320 (PTSLNFFAIRNVEHSILGIAFEPEQ) the chain is on the periplasmic side. The helical transmembrane segment at 321 to 341 (YQALNPFWIMIGSPILAAIYN) threads the bilayer. At 342-352 (KMGDRLPMPHK) the chain is on the cytoplasmic side. A helical transmembrane segment spans residues 353–373 (FAIGMVLCSGAFLVLPLGAKF). Residues 374–383 (ASDAGIVSVN) lie on the Periplasmic side of the membrane. The helical transmembrane segment at 384–404 (WLILSYALQSIGELMISGLGL) threads the bilayer. Topologically, residues 405-414 (AMVAQLVPQR) are cytoplasmic. The chain crosses the membrane as a helical span at residues 415 to 435 (LMGFIMGSWFLTTAGAAIIAG). Residues 436 to 459 (KIANLMAVPENVTDPLVSLEVYGH) are Periplasmic-facing. Residues 460-480 (VFLQIGIVTAVIAALMLLTAP) traverse the membrane as a helical segment. The Cytoplasmic portion of the chain corresponds to 481-501 (KLNRMTQDDSADLKARETAAA).

It belongs to the major facilitator superfamily. Proton-dependent oligopeptide transporter (POT/PTR) (TC 2.A.17) family. DtpA subfamily.

It localises to the cell inner membrane. Proton-dependent permease that transports di- and tripeptides. This chain is Dipeptide and tripeptide permease A, found in Klebsiella pneumoniae (strain 342).